We begin with the raw amino-acid sequence, 208 residues long: 3-demethoxyubiquinol 3-hydroxylase (208 aa).

Fe cation contacts are provided by glutamate 57, glutamate 87, histidine 90, glutamate 139, glutamate 171, and histidine 174.

Belongs to the COQ7 family. Requires Fe cation as cofactor.

Its subcellular location is the cell membrane. The catalysed reaction is a 5-methoxy-2-methyl-3-(all-trans-polyprenyl)benzene-1,4-diol + AH2 + O2 = a 3-demethylubiquinol + A + H2O. Its pathway is cofactor biosynthesis; ubiquinone biosynthesis. Functionally, catalyzes the hydroxylation of 2-nonaprenyl-3-methyl-6-methoxy-1,4-benzoquinol during ubiquinone biosynthesis. This Nitrosomonas eutropha (strain DSM 101675 / C91 / Nm57) protein is 3-demethoxyubiquinol 3-hydroxylase.